The following is a 253-amino-acid chain: 5'-nucleotidase SurE (253 aa).

Asp8, Asp9, Ser39, and Asn97 together coordinate a divalent metal cation.

It belongs to the SurE nucleotidase family. The cofactor is a divalent metal cation.

It is found in the cytoplasm. The catalysed reaction is a ribonucleoside 5'-phosphate + H2O = a ribonucleoside + phosphate. In terms of biological role, nucleotidase that shows phosphatase activity on nucleoside 5'-monophosphates. The sequence is that of 5'-nucleotidase SurE from Aeromonas hydrophila subsp. hydrophila (strain ATCC 7966 / DSM 30187 / BCRC 13018 / CCUG 14551 / JCM 1027 / KCTC 2358 / NCIMB 9240 / NCTC 8049).